Here is a 482-residue protein sequence, read N- to C-terminus: tRNA sulfurtransferase (482 aa).

The region spanning Gln61–His165 is the THUMP domain. Residues Leu183 to Ile184, Lys265, Gly287, and Gln296 each bind ATP. A disulfide bridge links Cys344 with Cys456. A Rhodanese domain is found at Ile404 to Pro482. The Cysteine persulfide intermediate role is filled by Cys456.

Belongs to the ThiI family.

It is found in the cytoplasm. It catalyses the reaction [ThiI sulfur-carrier protein]-S-sulfanyl-L-cysteine + a uridine in tRNA + 2 reduced [2Fe-2S]-[ferredoxin] + ATP + H(+) = [ThiI sulfur-carrier protein]-L-cysteine + a 4-thiouridine in tRNA + 2 oxidized [2Fe-2S]-[ferredoxin] + AMP + diphosphate. The catalysed reaction is [ThiS sulfur-carrier protein]-C-terminal Gly-Gly-AMP + S-sulfanyl-L-cysteinyl-[cysteine desulfurase] + AH2 = [ThiS sulfur-carrier protein]-C-terminal-Gly-aminoethanethioate + L-cysteinyl-[cysteine desulfurase] + A + AMP + 2 H(+). It participates in cofactor biosynthesis; thiamine diphosphate biosynthesis. Catalyzes the ATP-dependent transfer of a sulfur to tRNA to produce 4-thiouridine in position 8 of tRNAs, which functions as a near-UV photosensor. Also catalyzes the transfer of sulfur to the sulfur carrier protein ThiS, forming ThiS-thiocarboxylate. This is a step in the synthesis of thiazole, in the thiamine biosynthesis pathway. The sulfur is donated as persulfide by IscS. In Vibrio vulnificus (strain CMCP6), this protein is tRNA sulfurtransferase.